Reading from the N-terminus, the 144-residue chain is UPF0547 protein C16orf87 homolog (144 aa).

Residues 33 to 112 (HAKQSQRLPP…EEKEKQEKEV (80 aa)) form a disordered region. Polar residues predominate over residues 35 to 45 (KQSQRLPPTSE). Residues 50–62 (PKRRRTERIKRER) are compositionally biased toward basic residues. 2 stretches are compositionally biased toward basic and acidic residues: residues 63–74 (IHTAVNRDLENR) and 99–112 (KKHEEEKEKQEKEV). Positions 94–122 (KTATTKKHEEEKEKQEKEVDMYANLSDEK) form a coiled coil.

This sequence belongs to the UPF0547 family.

This chain is UPF0547 protein C16orf87 homolog, found in Xenopus laevis (African clawed frog).